The following is a 296-amino-acid chain: 33 kDa chaperonin (296 aa).

Intrachain disulfides connect Cys-236–Cys-238 and Cys-269–Cys-272.

It belongs to the HSP33 family. In terms of processing, under oxidizing conditions two disulfide bonds are formed involving the reactive cysteines. Under reducing conditions zinc is bound to the reactive cysteines and the protein is inactive.

It is found in the cytoplasm. In terms of biological role, redox regulated molecular chaperone. Protects both thermally unfolding and oxidatively damaged proteins from irreversible aggregation. Plays an important role in the bacterial defense system toward oxidative stress. This is 33 kDa chaperonin from Lactobacillus helveticus (strain DPC 4571).